The primary structure comprises 1080 residues: Myocardin-related transcription factor B (1080 aa).

An RPEL 1 repeat occupies 40–65 (EVLQLRLQQRRTREQLVDQGIMPPLK). Residue Ser-66 is modified to Phosphoserine. RPEL repeat units follow at residues 84 to 109 (NFLK…EETF) and 128 to 153 (DDLN…PVDS). Disordered regions lie at residues 170-222 (THGE…AQFT), 234-311 (TPLT…EPQM), 352-384 (PIKT…SSLD), and 477-501 (PHVE…LSTD). Polar residues-rich tracts occupy residues 188-200 (QPAS…SAAS) and 240-259 (QPPT…SSAK). Over residues 272–287 (NPNDKHRSKKCKDPKP) the composition is skewed to basic and acidic residues. Low complexity predominate over residues 358–370 (NSSSGSNSGSSSS). The region spanning 383 to 417 (LDDLKVSELKTELKLRGLPVSGTKPDLIERLKPYQ) is the SAP domain. 3 positions are modified to phosphoserine: Ser-531, Ser-535, and Ser-537. Residues 539 to 594 (SSSTLSTLELDAAEKDRKLQEKEKQIEELKRKLEQEQKLVEVLKMQLEVEKRGQQR) adopt a coiled-coil conformation. The tract at residues 557–585 (LQEKEKQIEELKRKLEQEQKLVEVLKMQL) is required for interaction with itself and with MRTFA. Disordered stretches follow at residues 588 to 646 (EKRG…SVGQ) and 794 to 846 (LQYQ…PQQF). Positions 595-606 (PPDPQPSDPPHP) are enriched in pro residues. A Glycyl lysine isopeptide (Lys-Gly) (interchain with G-Cter in SUMO1) cross-link involves residue Lys-622. Polar residues predominate over residues 794–821 (LQYQRQPGPTNQQPFVSKTSNPALQSRT). Ser-913 carries the post-translational modification Phosphoserine. Positions 969-988 (GTLPSATDTGPLQNSSEDRE) are disordered. Positions 972-983 (PSATDTGPLQNS) are enriched in polar residues.

Interacts with MRTFA and SRF. Post-translationally, O-glycosylated. As to expression, widely expressed. High expression in heart, brain and testis. Lower expression in lung, liver and kidney.

The protein localises to the nucleus. Its function is as follows. Acts as a transcriptional coactivator of serum response factor (SRF). Required for skeletal myogenic differentiation. This chain is Myocardin-related transcription factor B (Mrtfb), found in Mus musculus (Mouse).